A 236-amino-acid polypeptide reads, in one-letter code: MQPLFKRCGAEFFGTFWLVLGGCGSAVLAAGVPQVGIGYAGVALAFGLTVLTMAYAVGHISGGHFNPAVTVGLAASGRFGWRDVPPYIVAQVVGAIVAAATLASIAQGVAGFDLVASKFAANGYGDHSPGKYSMQAALICEIVLSAGFVFVILGATDKRAPAGFAPIPIGLALTLIHLISIPVTNTSVNPARSTGPALFVGGWALEQLWLFWLAPIAGALVGALAYRLVGTPSAQR.

2 helical membrane passes run 12-32 (FFGT…AAGV) and 37-57 (IGYA…AYAV). Residues 66-68 (NPA) carry the NPA 1 motif. 3 helical membrane passes run 92–112 (VVGA…VAGF), 136–156 (AALI…LGAT), and 163–183 (GFAP…SIPV). Positions 189–191 (NPA) match the NPA 2 motif. A helical membrane pass occupies residues 197–217 (ALFVGGWALEQLWLFWLAPIA).

This sequence belongs to the MIP/aquaporin (TC 1.A.8) family. Homotetramer.

It localises to the cell inner membrane. The enzyme catalyses H2O(in) = H2O(out). Channel that permits osmotically driven movement of water in both directions. It is involved in the osmoregulation and in the maintenance of cell turgor during volume expansion in rapidly growing cells. It mediates rapid entry or exit of water in response to abrupt changes in osmolarity. This is Aquaporin Z from Bordetella bronchiseptica (strain ATCC BAA-588 / NCTC 13252 / RB50) (Alcaligenes bronchisepticus).